The following is a 386-amino-acid chain: Protein RETICULATA-RELATED 4, chloroplastic (386 aa).

Residues 1 to 61 (MAIASCFFCV…RRVPITPVLS (61 aa)) constitute a chloroplast transit peptide. Positions 61–99 (SASSGNGGSDNNGGGLSGGGGGGDGGKNDGDGHGDEDRD) are disordered. Over residues 65-85 (GNGGSDNNGGGLSGGGGGGDG) the composition is skewed to gly residues. A compositionally biased stretch (basic and acidic residues) spans 86-99 (GKNDGDGHGDEDRD). Transmembrane regions (helical) follow at residues 201–221 (VVFADVAMAIIADFMLVYLPA) and 273–293 (KLFAVGTTSSLVGTAITNAFI).

It belongs to the RETICULATA family.

The protein resides in the plastid. It localises to the chloroplast membrane. May play a role in leaf development. In Arabidopsis thaliana (Mouse-ear cress), this protein is Protein RETICULATA-RELATED 4, chloroplastic.